We begin with the raw amino-acid sequence, 528 residues long: Low affinity inorganic phosphate transporter 4 (528 aa).

At 1 to 18 (MGLEVLEALDSARTQWYH) the chain is on the cytoplasmic side. A helical membrane pass occupies residues 19 to 39 (VTAIVIAGMGFFTDAYDLFCI). Topologically, residues 40-68 (STVSKLLGRLYYFDPSTNKPGKLPPSVNN) are extracellular. A helical transmembrane segment spans residues 69–89 (VVTGVALVGTLSGQLVFGWLG). Residues 90-96 (DKLGRKK) are Cytoplasmic-facing. A helical transmembrane segment spans residues 97–117 (VYGVTLIIMVACAICSGLSFG). Topologically, residues 118 to 122 (SSAKS) are extracellular. A helical transmembrane segment spans residues 123-143 (VMITLCFFRFWLGFGIGGDYP). The Cytoplasmic segment spans residues 144–158 (LSATIMSEYANKRTR). A helical membrane pass occupies residues 159 to 179 (GAFIAAVFAMQGVGIIFAGLV). Topologically, residues 180–208 (SMVFSGIFKAYYQAPRFNEDPILSTQPEG) are extracellular. A helical membrane pass occupies residues 209 to 229 (DLLWRLILMIGAVPAAMTYYW). The Cytoplasmic portion of the chain corresponds to 230 to 292 (RMKMPETGRY…SEFFNRHGRH (63 aa)). A helical membrane pass occupies residues 293 to 313 (LIGTMSCWFLLDIAFYSQNLT). Topologically, residues 314 to 341 (QKDIYPAMGLIRQDKEMNAIDEVFQTSR) are extracellular. The helical transmembrane segment at 342 to 362 (AMFVVALFGTFPGYWFTVFFI) threads the bilayer. The Cytoplasmic segment spans residues 363–371 (EKLGRFKIQ). A helical membrane pass occupies residues 372 to 392 (LVGFFMMSFFMFVIGVKYEYL). Topologically, residues 393–401 (KDENKNLFA) are extracellular. Residues 402 to 422 (LLYGLTFFFANFGPNSTTFVL) form a helical membrane-spanning segment. Residues 423 to 433 (PAELFPTRVRS) lie on the Cytoplasmic side of the membrane. A helical transmembrane segment spans residues 434-454 (TCHAFSAASGKAGAMVGAFGI). Over 455–468 (QYYTLDGTPRKIRR) the chain is Extracellular. Residues 469–489 (AMMILAFTNLIGFFCTFLVTE) traverse the membrane as a helical segment. At 490–528 (TKGRSLEEISGEDGRESELTATPNDRAPGIRQDSRTEKM) the chain is on the cytoplasmic side. Over residues 497–507 (EISGEDGRESE) the composition is skewed to basic and acidic residues. The tract at residues 497-528 (EISGEDGRESELTATPNDRAPGIRQDSRTEKM) is disordered.

This sequence belongs to the major facilitator superfamily. Phosphate:H(+) symporter (TC 2.A.1.9) family. Mostly expressed in mycorrhizal roots. Also observed in root tips of non-mycorrhizal roots, in a phosphate (Pi) depended-manner, highest expression levels being observed in low Pi conditions.

Its subcellular location is the cell membrane. It carries out the reaction phosphate(in) + H(+)(in) = phosphate(out) + H(+)(out). Its function is as follows. Low-affinity transporter for external inorganic phosphate (Pi) probably involved in the acquisition of phosphate released by arbuscular mycorrhizal (AM) fungi (e.g. Gigaspora gigantea, Glomus versiforme and G.intraradices) during AM symbiosis; required for propper mycorrhizal arbuscule morphology. Acts as a Pi-sensing machinery at the root tip level, independently of AM fungi, involved in the regulation of early root branching and lateral roots formation. This Medicago truncatula (Barrel medic) protein is Low affinity inorganic phosphate transporter 4.